A 521-amino-acid polypeptide reads, in one-letter code: GMP synthase [glutamine-hydrolyzing] (521 aa).

One can recognise a Glutamine amidotransferase type-1 domain in the interval 9–203; sequence KILILDFGSQ…VSDICQCKKN (195 aa). Catalysis depends on C86, which acts as the Nucleophile. Residues H177 and E179 contribute to the active site. Residues 204–396 enclose the GMPS ATP-PPase domain; the sequence is WTTDNIITKL…LGLPTHMLNC (193 aa). Residue 231–237 participates in ATP binding; sequence SGGVDSS.

Homodimer.

It carries out the reaction XMP + L-glutamine + ATP + H2O = GMP + L-glutamate + AMP + diphosphate + 2 H(+). The protein operates within purine metabolism; GMP biosynthesis; GMP from XMP (L-Gln route): step 1/1. Its function is as follows. Catalyzes the synthesis of GMP from XMP. This Vesicomyosocius okutanii subsp. Calyptogena okutanii (strain HA) protein is GMP synthase [glutamine-hydrolyzing].